A 191-amino-acid polypeptide reads, in one-letter code: 7-methyl-GTP pyrophosphatase (191 aa).

Aspartate 70 (proton acceptor) is an active-site residue.

This sequence belongs to the Maf family. YceF subfamily. A divalent metal cation is required as a cofactor.

It is found in the cytoplasm. It carries out the reaction N(7)-methyl-GTP + H2O = N(7)-methyl-GMP + diphosphate + H(+). Functionally, nucleoside triphosphate pyrophosphatase that hydrolyzes 7-methyl-GTP (m(7)GTP). May have a dual role in cell division arrest and in preventing the incorporation of modified nucleotides into cellular nucleic acids. This Xanthomonas oryzae pv. oryzae (strain KACC10331 / KXO85) protein is 7-methyl-GTP pyrophosphatase.